Consider the following 297-residue polypeptide: Pyridoxal 5'-phosphate synthase subunit PdxS (297 aa).

Residue Asp27 coordinates D-ribose 5-phosphate. Catalysis depends on Lys84, which acts as the Schiff-base intermediate with D-ribose 5-phosphate. Gly156 is a binding site for D-ribose 5-phosphate. Residue Arg168 coordinates D-glyceraldehyde 3-phosphate. Residues Gly217 and 238-239 (GS) contribute to the D-ribose 5-phosphate site.

This sequence belongs to the PdxS/SNZ family. As to quaternary structure, in the presence of PdxT, forms a dodecamer of heterodimers.

It catalyses the reaction aldehydo-D-ribose 5-phosphate + D-glyceraldehyde 3-phosphate + L-glutamine = pyridoxal 5'-phosphate + L-glutamate + phosphate + 3 H2O + H(+). Its pathway is cofactor biosynthesis; pyridoxal 5'-phosphate biosynthesis. Functionally, catalyzes the formation of pyridoxal 5'-phosphate from ribose 5-phosphate (RBP), glyceraldehyde 3-phosphate (G3P) and ammonia. The ammonia is provided by the PdxT subunit. Can also use ribulose 5-phosphate and dihydroxyacetone phosphate as substrates, resulting from enzyme-catalyzed isomerization of RBP and G3P, respectively. The protein is Pyridoxal 5'-phosphate synthase subunit PdxS of Corynebacterium efficiens (strain DSM 44549 / YS-314 / AJ 12310 / JCM 11189 / NBRC 100395).